Here is a 400-residue protein sequence, read N- to C-terminus: Elongation factor Tu (400 aa).

The tr-type G domain maps to 10 to 209 (KPHVNIGTIG…AVDKYIPTPQ (200 aa)). The segment at 19–26 (GHVDHGKT) is G1. 19-26 (GHVDHGKT) provides a ligand contact to GTP. Threonine 26 contributes to the Mg(2+) binding site. The tract at residues 60–64 (GITIN) is G2. The G3 stretch occupies residues 81–84 (DCPG). GTP-binding positions include 81–85 (DCPGH) and 136–139 (NKVD). Residues 136-139 (NKVD) form a G4 region. The segment at 174 to 176 (SAL) is G5.

This sequence belongs to the TRAFAC class translation factor GTPase superfamily. Classic translation factor GTPase family. EF-Tu/EF-1A subfamily. Monomer.

It is found in the cytoplasm. The catalysed reaction is GTP + H2O = GDP + phosphate + H(+). GTP hydrolase that promotes the GTP-dependent binding of aminoacyl-tRNA to the A-site of ribosomes during protein biosynthesis. This chain is Elongation factor Tu, found in Caldicellulosiruptor bescii (strain ATCC BAA-1888 / DSM 6725 / KCTC 15123 / Z-1320) (Anaerocellum thermophilum).